Consider the following 156-residue polypeptide: Small ribosomal subunit protein uS7c (156 aa).

It belongs to the universal ribosomal protein uS7 family. Part of the 30S ribosomal subunit.

It localises to the plastid. The protein localises to the chloroplast. In terms of biological role, one of the primary rRNA binding proteins, it binds directly to 16S rRNA where it nucleates assembly of the head domain of the 30S subunit. The protein is Small ribosomal subunit protein uS7c (rps7) of Cycas revoluta (Sago palm).